The chain runs to 156 residues: MSINATLLIQIIAFVLLIWFVNKVLWGPLSKLMEDRQKKIADGLSAAEKGKHELELAEQRAKEVLKEAKAQAQNVLSQAEKRGSEIVEDAKIKATEEADRIKAAAQAELEQEVSRAREDLRKEVSTLVVSGAEKILNKEVDAAAHNDMLETLVKSI.

A helical membrane pass occupies residues 1–21 (MSINATLLIQIIAFVLLIWFV).

Belongs to the ATPase B chain family. F-type ATPases have 2 components, F(1) - the catalytic core - and F(0) - the membrane proton channel. F(1) has five subunits: alpha(3), beta(3), gamma(1), delta(1), epsilon(1). F(0) has three main subunits: a(1), b(2) and c(10-14). The alpha and beta chains form an alternating ring which encloses part of the gamma chain. F(1) is attached to F(0) by a central stalk formed by the gamma and epsilon chains, while a peripheral stalk is formed by the delta and b chains.

The protein resides in the cell inner membrane. In terms of biological role, f(1)F(0) ATP synthase produces ATP from ADP in the presence of a proton or sodium gradient. F-type ATPases consist of two structural domains, F(1) containing the extramembraneous catalytic core and F(0) containing the membrane proton channel, linked together by a central stalk and a peripheral stalk. During catalysis, ATP synthesis in the catalytic domain of F(1) is coupled via a rotary mechanism of the central stalk subunits to proton translocation. Functionally, component of the F(0) channel, it forms part of the peripheral stalk, linking F(1) to F(0). The chain is ATP synthase subunit b from Hydrogenovibrio crunogenus (strain DSM 25203 / XCL-2) (Thiomicrospira crunogena).